A 330-amino-acid polypeptide reads, in one-letter code: Ribosomal RNA small subunit methyltransferase A (330 aa).

Positions 29, 31, 56, 77, and 98 each coordinate S-adenosyl-L-methionine. Positions 115–158 (PVRSAGLPQAETAPKGLEPAGSSSQQGPRDWLRQTAGAAAPSRG) are disordered. Asn-177 is a binding site for S-adenosyl-L-methionine.

The protein belongs to the class I-like SAM-binding methyltransferase superfamily. rRNA adenine N(6)-methyltransferase family. RsmA subfamily.

Its subcellular location is the cytoplasm. It catalyses the reaction adenosine(1518)/adenosine(1519) in 16S rRNA + 4 S-adenosyl-L-methionine = N(6)-dimethyladenosine(1518)/N(6)-dimethyladenosine(1519) in 16S rRNA + 4 S-adenosyl-L-homocysteine + 4 H(+). Its function is as follows. Specifically dimethylates two adjacent adenosines (A1518 and A1519) in the loop of a conserved hairpin near the 3'-end of 16S rRNA in the 30S particle. May play a critical role in biogenesis of 30S subunits. This chain is Ribosomal RNA small subunit methyltransferase A, found in Polaromonas sp. (strain JS666 / ATCC BAA-500).